The chain runs to 528 residues: Phosphoenolpyruvate carboxykinase (ATP) (528 aa).

Residues Arg-56, Tyr-192, and Lys-198 each contribute to the substrate site. ATP-binding positions include Lys-198, His-217, and 233–241 (GLSGTGKTT). Residues Lys-198 and His-217 each coordinate Mn(2+). A Mn(2+)-binding site is contributed by Asp-254. 3 residues coordinate ATP: Glu-282, Arg-319, and Thr-444. Arg-319 is a binding site for substrate.

It belongs to the phosphoenolpyruvate carboxykinase (ATP) family. Mn(2+) is required as a cofactor.

Its subcellular location is the cytoplasm. The enzyme catalyses oxaloacetate + ATP = phosphoenolpyruvate + ADP + CO2. The protein operates within carbohydrate biosynthesis; gluconeogenesis. Functionally, involved in the gluconeogenesis. Catalyzes the conversion of oxaloacetate (OAA) to phosphoenolpyruvate (PEP) through direct phosphoryl transfer between the nucleoside triphosphate and OAA. This is Phosphoenolpyruvate carboxykinase (ATP) from Bacillus cereus (strain G9842).